Reading from the N-terminus, the 241-residue chain is Probable transcriptional regulatory protein SAR11_0592 (241 aa).

The disordered stretch occupies residues 1–24 (MSGHSKWASIKHSKGKADKQRSKV).

The protein belongs to the TACO1 family.

The protein resides in the cytoplasm. This Pelagibacter ubique (strain HTCC1062) protein is Probable transcriptional regulatory protein SAR11_0592.